The primary structure comprises 274 residues: Putative phosphatase BUsg_029 (274 aa).

D8 acts as the Nucleophile in catalysis. Position 8 (D8) interacts with Mg(2+). L9 serves as a coordination point for phosphate. Position 10 (D10) interacts with Mg(2+). Phosphate-binding positions include 42 to 43 and K191; that span reads SG. D214 provides a ligand contact to Mg(2+). N217 serves as a coordination point for phosphate.

This sequence belongs to the HAD-like hydrolase superfamily. Cof family. It depends on Mg(2+) as a cofactor.

This chain is Putative phosphatase BUsg_029, found in Buchnera aphidicola subsp. Schizaphis graminum (strain Sg).